The chain runs to 814 residues: Valine--tRNA ligase (814 aa).

Positions 46–56 (PTVSGQLHIGH) match the 'HIGH' region motif. A 'KMSKS' region motif is present at residues 536–540 (KMSKS). K539 lines the ATP pocket.

Belongs to the class-I aminoacyl-tRNA synthetase family. ValS type 2 subfamily. In terms of assembly, monomer.

It localises to the cytoplasm. The enzyme catalyses tRNA(Val) + L-valine + ATP = L-valyl-tRNA(Val) + AMP + diphosphate. Functionally, catalyzes the attachment of valine to tRNA(Val). As ValRS can inadvertently accommodate and process structurally similar amino acids such as threonine, to avoid such errors, it has a 'posttransfer' editing activity that hydrolyzes mischarged Thr-tRNA(Val) in a tRNA-dependent manner. The sequence is that of Valine--tRNA ligase from Rickettsia prowazekii (strain Madrid E).